The chain runs to 118 residues: Autophagy-related protein 8 (118 aa).

Gly-116 carries the Phosphatidylethanolamine amidated glycine lipid modification. The propeptide at 117 to 118 (SI) is removed in mature form.

It belongs to the ATG8 family. In terms of assembly, conjugation to phosphatidylethanolamine (PE) leads to homodimerization. Interacts with ATG1, ATG3, ATG4, ATG7 and ATG12. In terms of processing, the C-terminal Ser-117 and Ile-118 residues of ATG8 are removed by ATG4 to expose Gly-116 at the C-terminus. This Gly-116 forms then a thioester bond with ATG7 (E1-like activating enzyme) before being transferred to ATG3 (the specific E2 conjugating enzyme), in order to be finally amidated with phosphatidylethanolamine. This lipid modification anchors ATG8 to membranes and can be reversed by ATG4, releasing soluble ATG8.

The protein resides in the cytoplasmic vesicle. It is found in the cvt vesicle membrane. The protein localises to the autophagosome membrane. It localises to the vacuole membrane. Its function is as follows. Ubiquitin-like modifier involved in cytoplasm to vacuole transport (Cvt) vesicles and autophagosome formation. With ATG4, mediates the delivery of the vesicles and autophagosomes to the vacuole via the microtubule cytoskeleton. Required for selective autophagic degradation of the nucleus (nucleophagy) as well as for mitophagy which contributes to regulate mitochondrial quantity and quality by eliminating the mitochondria to a basal level to fulfill cellular energy requirements and preventing excess ROS production. Also participates in membrane fusion events that take place in the early secretory pathway. Also involved in endoplasmic reticulum-specific autophagic process and is essential for the survival of cells subjected to severe ER stress. The ATG8-PE conjugate mediates tethering between adjacent membranes and stimulates membrane hemifusion, leading to expansion of the autophagosomal membrane during autophagy. Moreover not only conjugation, but also subsequent ATG8-PE deconjugation is an important step required to facilitate multiple events during macroautophagy, and especially for efficient autophagosome biogenesis, the assembly of ATG9-containing tubulovesicular clusters into phagophores/autophagosomes, and for the disassembly of PAS-associated ATG components. Contributes to conidiation by regulating the conidial levels of the conidiation-related protein CP15 and mediates fungal oxidation resistance by controlling total superoxide dismutase (SOD) activity. This is Autophagy-related protein 8 from Beauveria bassiana (strain ARSEF 2860) (White muscardine disease fungus).